Reading from the N-terminus, the 308-residue chain is Apolipoprotein E (308 aa).

An N-terminal signal peptide occupies residues 1–18; sequence MKFLWAALVVTLLAGCRA. 8 tandem repeats follow at residues 75-96, 97-118, 119-140, 141-162, 163-184, 185-206, 207-224, and 225-246. Residues 75 to 246 are 8 X 22 AA approximate tandem repeats; the sequence is LLIEETMKEV…RLDDMRDQME (172 aa). Positions 153 to 163 are LDL and other lipoprotein receptors binding; sequence HLRKLRKRLLR. 157–160 contacts heparin; it reads LRKR. A lipid-binding and lipoprotein association region spans residues 205 to 281; sequence AIPPSQQLRE…SWFEPLVQDM (77 aa). 220-227 is a binding site for heparin; that stretch reads GQKVRGRL. Positions 257–308 are homooligomerization; that stretch reads SQVRLQAEAFQTRLKSWFEPLVQDMQRQWASLVEKVQSTLGISPSTKPSKTK. Positions 269-281 are specificity for association with VLDL; that stretch reads RLKSWFEPLVQDM.

This sequence belongs to the apolipoprotein A1/A4/E family. Homotetramer. May interact with ABCA1; functionally associated with ABCA1 in the biogenesis of HDLs. May interact with APP/A4 amyloid-beta peptide; the interaction is extremely stable in vitro but its physiological significance is unclear. May interact with MAPT. May interact with MAP2. In the cerebrospinal fluid, interacts with secreted SORL1. Interacts with PMEL; this allows the loading of PMEL luminal fragment on ILVs to induce fibril nucleation. In terms of processing, APOE exists as multiple glycosylated and sialylated glycoforms within cells and in plasma. The extent of glycosylation and sialylation are tissue and context specific. Glycated in plasma VLDL. Post-translationally, phosphorylated by FAM20C in the extracellular medium.

It is found in the secreted. The protein resides in the extracellular space. Its subcellular location is the extracellular matrix. It localises to the extracellular vesicle. The protein localises to the endosome. It is found in the multivesicular body. Its function is as follows. APOE is an apolipoprotein, a protein associating with lipid particles, that mainly functions in lipoprotein-mediated lipid transport between organs via the plasma and interstitial fluids. APOE is a core component of plasma lipoproteins and is involved in their production, conversion and clearance. Apolipoproteins are amphipathic molecules that interact both with lipids of the lipoprotein particle core and the aqueous environment of the plasma. As such, APOE associates with chylomicrons, chylomicron remnants, very low density lipoproteins (VLDL) and intermediate density lipoproteins (IDL) but shows a preferential binding to high-density lipoproteins (HDL). It also binds a wide range of cellular receptors including the LDL receptor/LDLR and the very low-density lipoprotein receptor/VLDLR that mediate the cellular uptake of the APOE-containing lipoprotein particles. Finally, APOE also has a heparin-binding activity and binds heparan-sulfate proteoglycans on the surface of cells, a property that supports the capture and the receptor-mediated uptake of APOE-containing lipoproteins by cells. This Pteropus pselaphon (Bonin flying fox) protein is Apolipoprotein E (APOE).